We begin with the raw amino-acid sequence, 249 residues long: Polyhedrin (249 aa).

The protein belongs to the polyhedrin family.

Its function is as follows. Major component of the virus occlusion bodies, which are large proteinaceous structures (polyhedra), that protect the virus from the outside environment for extended periods until they are ingested by insect larvae. The protein is Polyhedrin (PH) of Lepidoptera (butterflies and moths).